Reading from the N-terminus, the 161-residue chain is Putative pre-16S rRNA nuclease (161 aa).

It belongs to the YqgF nuclease family.

The protein resides in the cytoplasm. Functionally, could be a nuclease involved in processing of the 5'-end of pre-16S rRNA. This is Putative pre-16S rRNA nuclease from Bartonella bacilliformis (strain ATCC 35685 / KC583 / Herrer 020/F12,63).